The primary structure comprises 334 residues: tRNA N6-adenosine threonylcarbamoyltransferase (334 aa).

Fe cation contacts are provided by histidine 110 and histidine 114. Substrate-binding positions include isoleucine 133–glycine 137, aspartate 166, glycine 179, aspartate 183, and asparagine 275. Fe cation is bound at residue aspartate 303.

The protein belongs to the KAE1 / TsaD family. The cofactor is Fe(2+).

The protein localises to the cytoplasm. The catalysed reaction is L-threonylcarbamoyladenylate + adenosine(37) in tRNA = N(6)-L-threonylcarbamoyladenosine(37) in tRNA + AMP + H(+). Its function is as follows. Required for the formation of a threonylcarbamoyl group on adenosine at position 37 (t(6)A37) in tRNAs that read codons beginning with adenine. Is involved in the transfer of the threonylcarbamoyl moiety of threonylcarbamoyl-AMP (TC-AMP) to the N6 group of A37, together with TsaE and TsaB. TsaD likely plays a direct catalytic role in this reaction. This is tRNA N6-adenosine threonylcarbamoyltransferase from Salinibacter ruber (strain DSM 13855 / M31).